A 96-amino-acid chain; its full sequence is ATP-dependent Clp protease adapter protein ClpS (96 aa).

It belongs to the ClpS family. Binds to the N-terminal domain of the chaperone ClpA.

Functionally, involved in the modulation of the specificity of the ClpAP-mediated ATP-dependent protein degradation. This Campylobacter jejuni subsp. jejuni serotype O:6 (strain 81116 / NCTC 11828) protein is ATP-dependent Clp protease adapter protein ClpS.